The primary structure comprises 198 residues: Recombination protein RecR (198 aa).

A C4-type zinc finger spans residues 57–72 (CSVCGNLTDDDPCLIC). In terms of domain architecture, Toprim spans 80–175 (SVILVVEDSK…KVTRLARGLA (96 aa)).

This sequence belongs to the RecR family.

Its function is as follows. May play a role in DNA repair. It seems to be involved in an RecBC-independent recombinational process of DNA repair. It may act with RecF and RecO. This chain is Recombination protein RecR, found in Streptococcus agalactiae serotype Ia (strain ATCC 27591 / A909 / CDC SS700).